The sequence spans 190 residues: Large ribosomal subunit protein uL6 (190 aa).

The protein belongs to the universal ribosomal protein uL6 family.

The chain is Large ribosomal subunit protein uL6 (RpL9) from Drosophila melanogaster (Fruit fly).